The sequence spans 940 residues: Vacuolar protein sorting-associated protein 54 (940 aa).

Thr-30 carries the phosphothreonine modification. The tract at residues 192 to 218 is disordered; sequence QQLERDKPLENGAQGAPGPGTGGQTPT. A coiled-coil region spans residues 299-325; sequence HAILAEMEQAADQVRQLRAALAELHSH.

It belongs to the VPS54 family.

The protein localises to the golgi apparatus. It localises to the trans-Golgi network. Its function is as follows. May be involved in retrograde transport from early and late endosomes to late Golgi. Required during spermatogenesis for sperm individualization. This Drosophila melanogaster (Fruit fly) protein is Vacuolar protein sorting-associated protein 54 (scat).